The following is a 99-amino-acid chain: Protein IDA-LIKE 3 (99 aa).

Residues 1-32 (MSSRSHRSRKYQLTRTIPILVLLLVLLSCCNG) form the signal peptide. Over residues 36–45 (TNVFNTSSPP) the composition is skewed to polar residues. 2 disordered regions span residues 36–58 (TNVF…HDHV) and 73–99 (SLPR…STKT). The span at 46 to 58 (KQKDVVSPPHDHV) shows a compositional bias: basic and acidic residues.

As to expression, expressed in flowers and seedlings. Detected at the base of pedicel, in the floral abscission zone and in vascular tissues.

The protein localises to the secreted. It localises to the extracellular space. Functionally, may be involved in floral abscission. This chain is Protein IDA-LIKE 3 (IDL3), found in Arabidopsis thaliana (Mouse-ear cress).